A 257-amino-acid chain; its full sequence is Ribonuclease PH (257 aa).

Phosphate contacts are provided by residues arginine 88 and 126–128 (GTR).

This sequence belongs to the RNase PH family. As to quaternary structure, homohexameric ring arranged as a trimer of dimers.

The catalysed reaction is tRNA(n+1) + phosphate = tRNA(n) + a ribonucleoside 5'-diphosphate. In terms of biological role, phosphorolytic 3'-5' exoribonuclease that plays an important role in tRNA 3'-end maturation. Removes nucleotide residues following the 3'-CCA terminus of tRNAs; can also add nucleotides to the ends of RNA molecules by using nucleoside diphosphates as substrates, but this may not be physiologically important. Probably plays a role in initiation of 16S rRNA degradation (leading to ribosome degradation) during starvation. This is Ribonuclease PH from Nocardia farcinica (strain IFM 10152).